The chain runs to 64 residues: Antimicrobial peptide THP2 (64 aa).

The signal sequence occupies residues 1 to 28 (MRILYLLFSLLFLALQVSPGLSSPKRDM). 3 disulfides stabilise this stretch: Cys31–Cys57, Cys36–Cys51, and Cys41–Cys58.

Expressed in circulating heterophil granulocytes and bone marrow (at protein level).

The protein resides in the secreted. Functionally, antibacterial activity against the Gram-positive bacterium Staphylococcus aureus. Lacks antibacterial activity against the Gram-negative bacterium E.coli K-12. This is Antimicrobial peptide THP2 from Meleagris gallopavo (Wild turkey).